Here is a 183-residue protein sequence, read N- to C-terminus: Peptide deformylase (183 aa).

Cys-111 and His-154 together coordinate Fe cation. Glu-155 is an active-site residue. His-158 contributes to the Fe cation binding site.

Belongs to the polypeptide deformylase family. Requires Fe(2+) as cofactor.

It carries out the reaction N-terminal N-formyl-L-methionyl-[peptide] + H2O = N-terminal L-methionyl-[peptide] + formate. In terms of biological role, removes the formyl group from the N-terminal Met of newly synthesized proteins. Requires at least a dipeptide for an efficient rate of reaction. N-terminal L-methionine is a prerequisite for activity but the enzyme has broad specificity at other positions. The chain is Peptide deformylase from Staphylococcus aureus (strain COL).